A 137-amino-acid polypeptide reads, in one-letter code: Putative pre-16S rRNA nuclease (137 aa).

Belongs to the YqgF nuclease family.

The protein resides in the cytoplasm. Functionally, could be a nuclease involved in processing of the 5'-end of pre-16S rRNA. In Bacillus cereus (strain 03BB102), this protein is Putative pre-16S rRNA nuclease.